A 110-amino-acid polypeptide reads, in one-letter code: Large ribosomal subunit protein uL22 (110 aa).

This sequence belongs to the universal ribosomal protein uL22 family. As to quaternary structure, part of the 50S ribosomal subunit.

In terms of biological role, this protein binds specifically to 23S rRNA; its binding is stimulated by other ribosomal proteins, e.g. L4, L17, and L20. It is important during the early stages of 50S assembly. It makes multiple contacts with different domains of the 23S rRNA in the assembled 50S subunit and ribosome. Its function is as follows. The globular domain of the protein is located near the polypeptide exit tunnel on the outside of the subunit, while an extended beta-hairpin is found that lines the wall of the exit tunnel in the center of the 70S ribosome. In Shewanella loihica (strain ATCC BAA-1088 / PV-4), this protein is Large ribosomal subunit protein uL22.